A 149-amino-acid polypeptide reads, in one-letter code: D-aminoacyl-tRNA deacylase (149 aa).

A Gly-cisPro motif, important for rejection of L-amino acids motif is present at residues 137 to 138 (GP).

Belongs to the DTD family. As to quaternary structure, homodimer.

It localises to the cytoplasm. The catalysed reaction is glycyl-tRNA(Ala) + H2O = tRNA(Ala) + glycine + H(+). The enzyme catalyses a D-aminoacyl-tRNA + H2O = a tRNA + a D-alpha-amino acid + H(+). An aminoacyl-tRNA editing enzyme that deacylates mischarged D-aminoacyl-tRNAs. Also deacylates mischarged glycyl-tRNA(Ala), protecting cells against glycine mischarging by AlaRS. Acts via tRNA-based rather than protein-based catalysis; rejects L-amino acids rather than detecting D-amino acids in the active site. By recycling D-aminoacyl-tRNA to D-amino acids and free tRNA molecules, this enzyme counteracts the toxicity associated with the formation of D-aminoacyl-tRNA entities in vivo and helps enforce protein L-homochirality. This chain is D-aminoacyl-tRNA deacylase, found in Caldicellulosiruptor bescii (strain ATCC BAA-1888 / DSM 6725 / KCTC 15123 / Z-1320) (Anaerocellum thermophilum).